The sequence spans 448 residues: Adenylosuccinate synthetase (448 aa).

GTP is bound by residues 36–42 (GDEGKGK) and 64–66 (GHT). Aspartate 37 acts as the Proton acceptor in catalysis. 2 residues coordinate Mg(2+): aspartate 37 and glycine 64. Residues 37-40 (DEGK), 62-65 (NAGH), threonine 154, arginine 168, asparagine 246, threonine 261, and arginine 325 each bind IMP. The Proton donor role is filled by histidine 65. Residue 321–327 (VTTKRKR) participates in substrate binding. Residues arginine 327, 353–355 (KLD), and 436–438 (GVG) each bind GTP.

It belongs to the adenylosuccinate synthetase family. Homodimer. Mg(2+) serves as cofactor.

Its subcellular location is the cytoplasm. It catalyses the reaction IMP + L-aspartate + GTP = N(6)-(1,2-dicarboxyethyl)-AMP + GDP + phosphate + 2 H(+). It functions in the pathway purine metabolism; AMP biosynthesis via de novo pathway; AMP from IMP: step 1/2. Plays an important role in the de novo pathway and in the salvage pathway of purine nucleotide biosynthesis. Catalyzes the first committed step in the biosynthesis of AMP from IMP. The sequence is that of Adenylosuccinate synthetase from Drosophila persimilis (Fruit fly).